The primary structure comprises 399 residues: Protein TWIN LOV 1 (399 aa).

A PAS 1 domain is found at L26 to E97. Residues R98–N153 enclose the PAC 1 domain. The 72-residue stretch at S249–Q320 folds into the PAS 2 domain. S-4a-FMN cysteine is present on C296. The 57-residue stretch at Q320 to P376 folds into the PAC 2 domain.

In terms of assembly, interacts with VTC2, VTC5 and BLH10. In terms of processing, FMN binds covalently to cysteine after exposure to blue light and is reversed in the dark.

The polypeptide is Protein TWIN LOV 1 (TLP1) (Arabidopsis thaliana (Mouse-ear cress)).